A 219-amino-acid chain; its full sequence is MTQQEMKKIAAQAALQFVKPDTIVGVGSGSTVNCFIDALASMKDQIKGAVAASKASEERLRAIGIEVFNANEVSELDVYIDGADEITPQGAMIKGGGAALTREKIVSSLAKKFVCIVDGSKQVDVLGTTFPLPVEVIPMARSYVARQLVALGGSPEYREGVVTDNGNVILDVHNFHIIEPLKMEHTINNIAGVVTNGIFAQRYANVTIVGTPEGAKIIE.

Residues 28-31 (SGST), 81-84 (DGAD), and 94-97 (KGGG) each bind substrate. Residue E103 is the Proton acceptor of the active site. K121 is a binding site for substrate.

This sequence belongs to the ribose 5-phosphate isomerase family. Homodimer.

It carries out the reaction aldehydo-D-ribose 5-phosphate = D-ribulose 5-phosphate. The protein operates within carbohydrate degradation; pentose phosphate pathway; D-ribose 5-phosphate from D-ribulose 5-phosphate (non-oxidative stage): step 1/1. Its function is as follows. Catalyzes the reversible conversion of ribose-5-phosphate to ribulose 5-phosphate. The protein is Ribose-5-phosphate isomerase A of Actinobacillus pleuropneumoniae serotype 5b (strain L20).